A 202-amino-acid chain; its full sequence is Heart- and neural crest derivatives-expressed protein 1 (202 aa).

The bHLH domain maps to 83 to 135 (RKGVGGPKKERRRTESINSAFAELRECIPNVPADTKLSKIKTLRLATSYIAYL). The disordered stretch occupies residues 143 to 187 (SQPGEPEGFKAELKKADGRENKRKRETQPEVYSQPLAHGEKKLKG). The segment covering 149 to 162 (EGFKAELKKADGRE) has biased composition (basic and acidic residues).

As to quaternary structure, efficient DNA binding requires dimerization with another bHLH protein.

The protein localises to the nucleus. It is found in the nucleoplasm. Its subcellular location is the nucleolus. Transcription factor. Plays an essential role in cardiac morphogenesis. This Gallus gallus (Chicken) protein is Heart- and neural crest derivatives-expressed protein 1 (HAND1).